The primary structure comprises 805 residues: Phosphoinositide 3-kinase adapter protein 1 (805 aa).

Residues 8 to 145 enclose the TIR domain; sequence RGCDILIVYS…AVKKAISEDS (138 aa). The interval 10-144 is necessary and sufficient to mediate inhibition of NF-kappa-B downstream of activated TLRs; may mediate interaction with MYD88 and TIRAP; the sequence is CDILIVYSPD…AAVKKAISED (135 aa). The disordered stretch occupies residues 145-165; that stretch reads SGCDSVTDTEPEDEKVVSYSK. The region spanning 181–317 is the DBB domain; it reads VQPDRIRCGA…NIPASGLHLF (137 aa). Tyr263 carries the phosphotyrosine modification. A phosphotyrosine; by SYK mark is found at Tyr419, Tyr444, and Tyr459. Position 513 is a phosphotyrosine; by ABL1 (Tyr513). Positions 527–547 are disordered; sequence ASRPPVPVPRPETTAPGAHQL. Residues Tyr553 and Tyr570 each carry the phosphotyrosine; by ABL1 modification. Residues 571–590 are disordered; the sequence is VSSESIRKGPPVRPWRDRPQ. Tyr594 bears the Phosphotyrosine; by ABL1 mark. A Phosphoserine modification is found at Ser642. Residues 645-667 are a coiled coil; sequence FQQENLKRLRDSITRRQREKQKS. Residues 654 to 672 show a composition bias toward basic and acidic residues; that stretch reads RDSITRRQREKQKSGKQTD. The interval 654 to 679 is disordered; the sequence is RDSITRRQREKQKSGKQTDLEITVPI. Tyr694 is modified (phosphotyrosine; by ABL1). The tract at residues 697–805 is disordered; the sequence is GPRKSVIPPR…PPPPVPPRGR (109 aa). Basic and acidic residues predominate over residues 707–716; that stretch reads TELRRGDWKT. The segment covering 717 to 740 has biased composition (low complexity); sequence DSTSSTASSTSNRSSTRSLLSVSS. Ser718 bears the Phosphoserine mark. The span at 795–805 shows a compositional bias: pro residues; that stretch reads HPPPPVPPRGR.

As to quaternary structure, homooligomer. Interacts (phosphorylated on tyrosine residues within YXXM motifs) with PIK3R1 (via SH2 domain); required for BCR- and TLR-mediated activation of phosphoinositide 3-kinase. Interacts (via polyproline C-terminal region) with ABI1 (via SH3 domain); the interaction promotes phosphorylation of PIK3AP1 by ABL1. May interact with MYD88 and TIRAP. Constitutively phosphorylated. Phosphorylated on tyrosine residues in C-terminal region by ABL1. Phosphorylated on tyrosine residues within the YXXM motifs by BTK and SYK. Isoform 1 and isoform 2 are phosphorylated on tyrosine residues, most likely within the YXXM motifs, via CD19 activation. Toll-like receptor activation induces appearance of a phosphorylated form associated with membranes. In terms of tissue distribution, expressed in natural killer (NK) cells.

It localises to the cytoplasm. Its subcellular location is the cell membrane. Functionally, signaling adapter that contributes to B-cell development by linking B-cell receptor (BCR) signaling to the phosphoinositide 3-kinase (PI3K)-Akt signaling pathway. Has a complementary role to the BCR coreceptor CD19, coupling BCR and PI3K activation by providing a docking site for the PI3K subunit PIK3R1. Alternatively, links Toll-like receptor (TLR) signaling to PI3K activation, a process preventing excessive inflammatory cytokine production. Also involved in the activation of PI3K in natural killer cells. May be involved in the survival of mature B-cells via activation of REL. The chain is Phosphoinositide 3-kinase adapter protein 1 (PIK3AP1) from Homo sapiens (Human).